The primary structure comprises 347 residues: MAVRIDGSYGEGGGQILRTSIALSALLGKPVEIVNIRAKRANPGLQPQHLTGVSAAALLTDAEVEGAAKGSTRLFFKPKALKCGTFNIDIGTAGSISLVVQTLAPILLYAPCPTKLVITGGTDVAWAPPIDYMRFVFARYLTRFGARIAIELVKRGHYPRGGGKAVVQAEPAGRLRAVDSVEFGRPAKIAGVSHAVNLPPHVAERQARAAREALAKLGYAAEVEVEARNDGLGPGSGVVLWAESDVGNVVGGDALGERGKPAEEVGREAAEKLAAVLKAGASLDPHMADMVVLYMALAQGRSRLSTTEATMHLQTNIYIVEQFLPVKFKLERAGPRYIIEVEGVGYP.

Residues Gln101 and 286–289 contribute to the ATP site; that span reads HMAD. Residue His312 is the Tele-AMP-histidine intermediate of the active site.

This sequence belongs to the RNA 3'-terminal cyclase family. Type 1 subfamily.

Its subcellular location is the cytoplasm. The catalysed reaction is a 3'-end 3'-phospho-ribonucleotide-RNA + ATP = a 3'-end 2',3'-cyclophospho-ribonucleotide-RNA + AMP + diphosphate. In terms of biological role, catalyzes the conversion of 3'-phosphate to a 2',3'-cyclic phosphodiester at the end of RNA. The mechanism of action of the enzyme occurs in 3 steps: (A) adenylation of the enzyme by ATP; (B) transfer of adenylate to an RNA-N3'P to produce RNA-N3'PP5'A; (C) and attack of the adjacent 2'-hydroxyl on the 3'-phosphorus in the diester linkage to produce the cyclic end product. The biological role of this enzyme is unknown but it is likely to function in some aspects of cellular RNA processing. This chain is RNA 3'-terminal phosphate cyclase, found in Pyrobaculum neutrophilum (strain DSM 2338 / JCM 9278 / NBRC 100436 / V24Sta) (Thermoproteus neutrophilus).